The primary structure comprises 132 residues: Small ribosomal subunit protein uS8 (132 aa).

The protein belongs to the universal ribosomal protein uS8 family. Part of the 30S ribosomal subunit. Contacts proteins S5 and S12.

In terms of biological role, one of the primary rRNA binding proteins, it binds directly to 16S rRNA central domain where it helps coordinate assembly of the platform of the 30S subunit. This is Small ribosomal subunit protein uS8 from Acetivibrio thermocellus (strain ATCC 27405 / DSM 1237 / JCM 9322 / NBRC 103400 / NCIMB 10682 / NRRL B-4536 / VPI 7372) (Clostridium thermocellum).